Reading from the N-terminus, the 425-residue chain is Dihydroorotase (425 aa).

Residues H56 and H58 each contribute to the Zn(2+) site. Substrate-binding positions include 58–60 and N90; that span reads HWR. Positions 147, 174, and 227 each coordinate Zn(2+). Residue N273 participates in substrate binding. D300 provides a ligand contact to Zn(2+). The active site involves D300. Substrate-binding positions include H304 and 318 to 319; that span reads FG.

Belongs to the metallo-dependent hydrolases superfamily. DHOase family. Class I DHOase subfamily. Zn(2+) serves as cofactor.

The catalysed reaction is (S)-dihydroorotate + H2O = N-carbamoyl-L-aspartate + H(+). Its pathway is pyrimidine metabolism; UMP biosynthesis via de novo pathway; (S)-dihydroorotate from bicarbonate: step 3/3. In terms of biological role, catalyzes the reversible cyclization of carbamoyl aspartate to dihydroorotate. This chain is Dihydroorotase, found in Fusobacterium nucleatum subsp. nucleatum (strain ATCC 25586 / DSM 15643 / BCRC 10681 / CIP 101130 / JCM 8532 / KCTC 2640 / LMG 13131 / VPI 4355).